The chain runs to 402 residues: Nodal homolog 4-A (402 aa).

Positions 1–18 (MHLYFYCLILLFVPGGNS) are cleaved as a signal peptide. The propeptide occupies 19 to 278 (LGINSYLKHM…TIAHTRRHRR (260 aa)). 3 N-linked (GlcNAc...) asparagine glycosylation sites follow: Asn37, Asn238, and Asn340. Cystine bridges form between Cys302/Cys368, Cys331/Cys399, and Cys335/Cys401.

The protein belongs to the TGF-beta family. Homodimer; disulfide-linked. As to expression, during blastula stages, expressed in the endoderm at a higher level dorsally than ventrally. Expressed in the deep cells of the Spemann organizer at the gastrula stage. Expressed in the notochord (a derivative of the organizer) and neural tube during the neural stages.

It is found in the secreted. Functionally, cooperation and regulatory loops of multiple nodals are essential for mesendoderm patterning in early embryos. Plays a role in mesoderm formation and may be required for neural development. The sequence is that of Nodal homolog 4-A (nodal4-a) from Xenopus laevis (African clawed frog).